Consider the following 2641-residue polypeptide: Prosolanapyrone synthase (2641 aa).

One can recognise a Ketosynthase family 3 (KS3) domain in the interval 14-440; that stretch reads PEPIAIVGMG…GANGHCIIDD (427 aa). Active-site for beta-ketoacyl synthase activity residues include C187, H323, and H363. The tract at residues 456-515 is disordered; it reads SIGHINGHTNGHTNGHTNGHTNGHTNGHTNGHTNGAHASDGHNGHHQNGMNGNSASHMSE. The segment covering 461 to 490 has biased composition (low complexity); that stretch reads NGHTNGHTNGHTNGHTNGHTNGHTNGHTNG. The interval 619–920 is malonyl-CoA:ACP transacylase (MAT); it reads FVFTGQGAQW…KGPVGQISRS (302 aa). An N-terminal hotdog fold region spans residues 1011–1149; the sequence is HDLLGSKLPG…GRVRVIAGTS (139 aa). A dehydratase (DH) domain region spans residues 1011 to 1309; that stretch reads HDLLGSKLPG…GNLRCVTYTE (299 aa). Positions 1011-1313 constitute a PKS/mFAS DH domain; it reads HDLLGSKLPG…CVTYTEVLPS (303 aa). H1043 (proton acceptor; for dehydratase activity) is an active-site residue. A C-terminal hotdog fold region spans residues 1161-1313; it reads ARTLDTKAWY…CVTYTEVLPS (153 aa). Catalysis depends on D1227, which acts as the Proton donor; for dehydratase activity. The interval 1477–1665 is methyltransferase (MT) domain; sequence TGAYPQLVRF…GAELVLDDYP (189 aa). Residues 1894–2206 form an enoyl reductase (ER) domain region; that stretch reads GLLTSLYFKP…KGTHVGKLVV (313 aa). The segment at 2231 to 2408 is ketoreductase (KR) domain; that stretch reads NYLITGGLGG…STVSFGLIRD (178 aa). The Carrier domain maps to 2561–2639; that stretch reads RTVALVTDAI…ILANKIVDGA (79 aa). The residue at position 2598 (S2598) is an O-(pantetheine 4'-phosphoryl)serine.

It functions in the pathway phytotoxin biosynthesis. Its function is as follows. Prosolanapyrone synthase; part of the gene cluster that mediates the biosynthesis of the phytotoxin solanapyrone, a causal agent of early blight disease of potato and tomato. The prosolanapyrone synthase sol1 is a polyketide synthase that produces the octaketide desmethylprosolanapyrone I via sequential condensations of 7 malonyl-CoA units with one acetyl-CoA unit, and one methylation step. The octaketide backbone is further methylated by the sol2 O-methyltransferase to yield prosolanapyrone I. Prosolanapyrone I is hydroxylated to prosolanapyrone II by the cytochrome P450 monooxygenase sol6. The solanapyrone synthase sol5 then catalyzes the oxidation of prosolanapyrone II and the subsequent Diels Alder cycloisomerization of the product prosolanapyrone III to solanapyrones A and D. Solanapyrones A and D are then converted into solanapyrones B and E, respectively, by the sol3 dehydrogenase. The chain is Prosolanapyrone synthase (sol1) from Alternaria solani.